The sequence spans 294 residues: MAQTGTERVKRGMAEMQKGGVIMDVINAEQAKIAEEAGAVAVMALERVPADIRAAGGVARMADPTIVEEVMNAVSIPVMAKARIGHIVEARVLEAMGVDYIDESEVLTPADEEFHLNKNEYTVPFVCGCRDLGEATRRIAEGASMLRTKGEPGTGNIVEAVRHMRKVNAQVRKVVAMSEDELMTEAKNLGAPYELLLQIKKDGKLPVVNFAAGGVATPADAALMMQLGADGVFVGSGIFKSDNPAKFAKAIVEATTHFTDYKLIAELSKELGTAMKGIEISNLLPEQRMQERGW.

D24 contacts D-ribose 5-phosphate. Catalysis depends on K81, which acts as the Schiff-base intermediate with D-ribose 5-phosphate. G153 is a D-ribose 5-phosphate binding site. R165 serves as a coordination point for D-glyceraldehyde 3-phosphate. Residues G214 and 235 to 236 contribute to the D-ribose 5-phosphate site; that span reads GS.

The protein belongs to the PdxS/SNZ family. Homohexamer and homododecamer. In the presence of PdxT, forms a dodecamer of heterodimers.

It carries out the reaction aldehydo-D-ribose 5-phosphate + D-glyceraldehyde 3-phosphate + L-glutamine = pyridoxal 5'-phosphate + L-glutamate + phosphate + 3 H2O + H(+). It participates in cofactor biosynthesis; pyridoxal 5'-phosphate biosynthesis. Its function is as follows. Catalyzes the formation of pyridoxal 5'-phosphate from ribose 5-phosphate (RBP), glyceraldehyde 3-phosphate (G3P) and ammonia. The ammonia is provided by the PdxT subunit. Can also use ribulose 5-phosphate and dihydroxyacetone phosphate as substrates, resulting from enzyme-catalyzed isomerization of RBP and G3P, respectively. This chain is Pyridoxal 5'-phosphate synthase subunit PdxS, found in Bacillus subtilis (strain 168).